A 731-amino-acid chain; its full sequence is Beta-galactosidase (731 aa).

The first 23 residues, 1 to 23, serve as a signal peptide directing secretion; sequence MGVGIQTMWSILLLFSCIFSAAS. The Proton donor role is filled by Glu-182. Glu-251 acts as the Nucleophile in catalysis. Asn-459 is a glycosylation site (N-linked (GlcNAc...) asparagine).

The protein belongs to the glycosyl hydrolase 35 family.

It localises to the secreted. It is found in the extracellular space. The protein resides in the apoplast. The catalysed reaction is Hydrolysis of terminal non-reducing beta-D-galactose residues in beta-D-galactosides.. Involved in cell wall degradation. Degrades polysaccharides containing beta-(1--&gt;4)-linked galactans, acting as an exo-(1--&gt;4)-beta-D-galactanase. This chain is Beta-galactosidase, found in Malus domestica (Apple).